The sequence spans 95 residues: Small ubiquitin-related modifier 2-B (95 aa).

K11 participates in a covalent cross-link: Glycyl lysine isopeptide (Lys-Gly) (interchain with G-Cter in SUMO). One can recognise a Ubiquitin-like domain in the interval 16–95; sequence DHINLKVAGQ…VFQQQTGGSY (80 aa). G93 is covalently cross-linked (Glycyl lysine isopeptide (Gly-Lys) (interchain with K-? in acceptor proteins)). A propeptide spanning residues 94–95 is cleaved from the precursor; the sequence is SY.

Belongs to the ubiquitin family. SUMO subfamily. As to quaternary structure, interacts with sae2 and ube2i. Covalently attached to a number of proteins, including top2. Post-translationally, polymeric chains can be formed through Lys-11 cross-linking. In terms of processing, cleavage of precursor form by a sentrin-specific protease is necessary for function.

The protein localises to the nucleus. Functionally, ubiquitin-like protein that can be covalently attached to proteins as a monomer or as a lysine-linked polymer. Covalent attachment via an isopeptide bond to its substrates requires prior activation by the E1 complex sae1-sae2 and linkage to the E2 enzyme ube2i, and can be promoted by an E3 ligase such as pias1-4. This post-translational modification on lysine residues of proteins plays a crucial role in a number of cellular processes such as nuclear transport, DNA replication and repair, mitosis and signal transduction. Polymeric sumo2 chains are also susceptible to polyubiquitination which functions as a signal for proteasomal degradation of modified proteins. This is Small ubiquitin-related modifier 2-B (sumo2-b) from Xenopus laevis (African clawed frog).